We begin with the raw amino-acid sequence, 848 residues long: DNA-binding protein RFX6 (848 aa).

Residues 56–131 constitute a DNA-binding region (RFX-type winged-helix); the sequence is TLQWLEDNYI…YHYYGIGIKE (76 aa).

The protein belongs to the RFX family. Expressed in progenitors and hormone expressing cells of the islet lineage.

The protein localises to the nucleus. Transcription factor required to direct islet cell differentiation during endocrine pancreas development. This Danio rerio (Zebrafish) protein is DNA-binding protein RFX6 (rfx6).